A 161-amino-acid chain; its full sequence is Regulator of ribonuclease activity A (161 aa).

The protein belongs to the RraA family. Homotrimer. Binds to both RNA-binding sites in the C-terminal region of Rne and to RhlB.

It localises to the cytoplasm. In terms of biological role, globally modulates RNA abundance by binding to RNase E (Rne) and regulating its endonucleolytic activity. Can modulate Rne action in a substrate-dependent manner by altering the composition of the degradosome. Modulates RNA-binding and helicase activities of the degradosome. This is Regulator of ribonuclease activity A from Salmonella agona (strain SL483).